The primary structure comprises 675 residues: Polyphosphate kinase (675 aa).

Asn42 is a binding site for ATP. The Mg(2+) site is built by Arg372 and Arg401. Residue His431 is the Phosphohistidine intermediate of the active site. Residues Tyr464, Arg558, and His586 each contribute to the ATP site.

The protein belongs to the polyphosphate kinase 1 (PPK1) family. Mg(2+) is required as a cofactor. In terms of processing, an intermediate of this reaction is the autophosphorylated ppk in which a phosphate is covalently linked to a histidine residue through a N-P bond.

It catalyses the reaction [phosphate](n) + ATP = [phosphate](n+1) + ADP. Functionally, catalyzes the reversible transfer of the terminal phosphate of ATP to form a long-chain polyphosphate (polyP). The polypeptide is Polyphosphate kinase (Helicobacter pylori (strain J99 / ATCC 700824) (Campylobacter pylori J99)).